Here is a 467-residue protein sequence, read N- to C-terminus: UTP--glucose-1-phosphate uridylyltransferase (467 aa).

Residues 83-86 (LNGG), Lys97, Gln160, and Gly189 contribute to the UTP site. A substrate-binding site is contributed by 85 to 86 (GG). Substrate contacts are provided by residues His190 and 218–220 (NSD). Positions 220 and 358 each coordinate UTP.

The protein belongs to the UDPGP type 1 family.

It localises to the cytoplasm. The enzyme catalyses alpha-D-glucose 1-phosphate + UTP + H(+) = UDP-alpha-D-glucose + diphosphate. In terms of biological role, plays a central role as a glucosyl donor in cellular metabolic pathways. The sequence is that of UTP--glucose-1-phosphate uridylyltransferase (UGPA) from Musa acuminata (Banana).